Consider the following 77-residue polypeptide: U8-lycotoxin-Ls1l (77 aa).

An N-terminal signal peptide occupies residues 1–20; sequence MKLMIFTGLVLFAIVSLIEA. A propeptide spanning residues 21–26 is cleaved from the precursor; the sequence is QAENEK.

It belongs to the neurotoxin 19 (CSTX) family. 08 (U8-Lctx) subfamily. Post-translationally, contains 4 disulfide bonds. As to expression, expressed by the venom gland.

Its subcellular location is the secreted. This chain is U8-lycotoxin-Ls1l, found in Lycosa singoriensis (Wolf spider).